The sequence spans 861 residues: E3 ubiquitin-protein ligase SH3RF1 (861 aa).

The segment at 12–53 adopts an RING-type zinc-finger fold; the sequence is CPVCLERLDASAKVLPCQHTFCKRCLLGIVSSRNELRCPECR. 2 SH3 domains span residues 132 to 191 and 194 to 257; these read PQLP…IIKP and QPPP…FNSA. Residues 268–319 form a disordered region; the sequence is SGVDTGEGSSGTTHSSNSQKQADAKKNTKKRHSFTSLTMSNKSSQSVQNRHS. The span at 273 to 285 shows a compositional bias: low complexity; that stretch reads GEGSSGTTHSSNS. A compositionally biased stretch (polar residues) spans 301–317; sequence FTSLTMSNKSSQSVQNR. The SH3 3 domain maps to 435–496; that stretch reads TRPSVFVAIY…PGNYVAPVTR (62 aa). Residues 684–731 form a disordered region; sequence NSAANKQDKDSKKEKKGLLKLLSGASTKRKPRSSPPHSPTQELEQTNS. Positions 689–700 are enriched in basic and acidic residues; it reads KQDKDSKKEKKG. The SH3 4 domain occupies 802–861; the sequence is RPCERYRVVVSYPPQSEAELELKEGDIVFVHKKREDGWFKGTLQRNGKTGLFPGSFVENI.

The protein belongs to the SH3RF family. Autoubiquitinated. Ubiquitinated by SH3RF2, leading to proteasome-mediated degradation.

Its subcellular location is the cytoplasm. The protein localises to the perinuclear region. It localises to the cell projection. The protein resides in the lamellipodium. It is found in the golgi apparatus. Its subcellular location is the trans-Golgi network. The catalysed reaction is S-ubiquitinyl-[E2 ubiquitin-conjugating enzyme]-L-cysteine + [acceptor protein]-L-lysine = [E2 ubiquitin-conjugating enzyme]-L-cysteine + N(6)-ubiquitinyl-[acceptor protein]-L-lysine.. The protein operates within protein modification; protein ubiquitination. In terms of biological role, has E3 ubiquitin-protein ligase activity. In the absence of an external substrate, it can catalyze self-ubiquitination. Acts as a scaffold protein that contributes to the effective activation of the JNK signaling pathway. The protein is E3 ubiquitin-protein ligase SH3RF1 (sh3rf1) of Xenopus tropicalis (Western clawed frog).